Here is a 118-residue protein sequence, read N- to C-terminus: Large ribosomal subunit protein bL20 (118 aa).

It belongs to the bacterial ribosomal protein bL20 family.

Functionally, binds directly to 23S ribosomal RNA and is necessary for the in vitro assembly process of the 50S ribosomal subunit. It is not involved in the protein synthesizing functions of that subunit. This Pseudoalteromonas atlantica (strain T6c / ATCC BAA-1087) protein is Large ribosomal subunit protein bL20.